Reading from the N-terminus, the 25-residue chain is M-poneritoxin-Ng1a (25 aa).

Expressed by the venom gland.

It is found in the secreted. The protein localises to the target cell membrane. Functionally, has a broad spectrum of activity against both Gram-positive and Gram-negative bacteria and S.cerevisiae. Has insecticidal and hemolytic activities. May act by disrupting the integrity of the bacterial cell membrane. This chain is M-poneritoxin-Ng1a, found in Neoponera goeldii (Ponerine ant).